The sequence spans 731 residues: Catalase-peroxidase (731 aa).

Positions 98 to 227 form a cross-link, tryptophyl-tyrosyl-methioninium (Trp-Tyr) (with M-254); sequence WHAAGTYRTA…LAAIQMGLIY (130 aa). Catalysis depends on His99, which acts as the Proton acceptor. The tryptophyl-tyrosyl-methioninium (Tyr-Met) (with W-98) cross-link spans 227 to 254; sequence YVNPEGPQGNPHDDEGMARDMKETFKRM. His269 is a heme b binding site.

This sequence belongs to the peroxidase family. Peroxidase/catalase subfamily. As to quaternary structure, homodimer or homotetramer. It depends on heme b as a cofactor. In terms of processing, formation of the three residue Trp-Tyr-Met cross-link is important for the catalase, but not the peroxidase activity of the enzyme.

The enzyme catalyses H2O2 + AH2 = A + 2 H2O. It catalyses the reaction 2 H2O2 = O2 + 2 H2O. Functionally, bifunctional enzyme with both catalase and broad-spectrum peroxidase activity. The chain is Catalase-peroxidase from Sphingopyxis alaskensis (strain DSM 13593 / LMG 18877 / RB2256) (Sphingomonas alaskensis).